We begin with the raw amino-acid sequence, 344 residues long: N-acetyl-gamma-glutamyl-phosphate reductase (344 aa).

The active site involves C150.

Belongs to the NAGSA dehydrogenase family. Type 1 subfamily.

The protein localises to the cytoplasm. The catalysed reaction is N-acetyl-L-glutamate 5-semialdehyde + phosphate + NADP(+) = N-acetyl-L-glutamyl 5-phosphate + NADPH + H(+). It functions in the pathway amino-acid biosynthesis; L-arginine biosynthesis; N(2)-acetyl-L-ornithine from L-glutamate: step 3/4. Its function is as follows. Catalyzes the NADPH-dependent reduction of N-acetyl-5-glutamyl phosphate to yield N-acetyl-L-glutamate 5-semialdehyde. This Pseudomonas paraeruginosa (strain DSM 24068 / PA7) (Pseudomonas aeruginosa (strain PA7)) protein is N-acetyl-gamma-glutamyl-phosphate reductase.